The following is a 277-amino-acid chain: Pristinamycin IIA synthase subunit B (277 aa).

In terms of assembly, heterodimer of two subunits, SnaA and SnaB. Requires FMN as cofactor.

In terms of biological role, catalyzes the oxidation of the proline residue of pristinamycin IIB (PIIB) to pristinamycin IIA (PIIA). The polypeptide is Pristinamycin IIA synthase subunit B (snaB) (Streptomyces pristinaespiralis).